A 283-amino-acid chain; its full sequence is Bifunctional protein FolD (283 aa).

NADP(+) contacts are provided by residues 164-166 (GRS), Ser189, and Ile230.

Belongs to the tetrahydrofolate dehydrogenase/cyclohydrolase family. In terms of assembly, homodimer.

It catalyses the reaction (6R)-5,10-methylene-5,6,7,8-tetrahydrofolate + NADP(+) = (6R)-5,10-methenyltetrahydrofolate + NADPH. It carries out the reaction (6R)-5,10-methenyltetrahydrofolate + H2O = (6R)-10-formyltetrahydrofolate + H(+). It functions in the pathway one-carbon metabolism; tetrahydrofolate interconversion. Its function is as follows. Catalyzes the oxidation of 5,10-methylenetetrahydrofolate to 5,10-methenyltetrahydrofolate and then the hydrolysis of 5,10-methenyltetrahydrofolate to 10-formyltetrahydrofolate. In Lacticaseibacillus paracasei (strain ATCC 334 / BCRC 17002 / CCUG 31169 / CIP 107868 / KCTC 3260 / NRRL B-441) (Lactobacillus paracasei), this protein is Bifunctional protein FolD.